A 1742-amino-acid chain; its full sequence is Complement C4 (1742 aa).

The signal sequence occupies residues 1–19 (MRLLWGLLWAFGLFASSLQ). The N-linked (GlcNAc...) asparagine glycan is linked to Asn-60. Cys-68 and Cys-97 are oxidised to a cystine. The N-linked (GlcNAc...) asparagine glycan is linked to Asn-226. Cys-634 and Cys-668 are oxidised to a cystine. Positions 675–678 (RKKR) are excised as a propeptide. 3 disulfide bridges follow: Cys-701–Cys-727, Cys-702–Cys-734, and Cys-715–Cys-735. The Anaphylatoxin-like domain maps to 701 to 735 (CCQDGLTRLPMVRSCEQRAARVLQPACREPFLSCC). Residue Asn-861 is glycosylated (N-linked (GlcNAc...) asparagine). The segment at residues 1007–1010 (CGEQ) is a cross-link (isoglutamyl cysteine thioester (Cys-Gln)). N-linked (GlcNAc...) asparagine glycosylation is found at Asn-1325 and Asn-1388. Sulfotyrosine occurs at positions 1414, 1418, and 1420. The propeptide occupies 1445–1451 (RRNRRRR). Intrachain disulfides connect Cys-1469–Cys-1533, Cys-1581–Cys-1586, Cys-1593–Cys-1671, Cys-1616–Cys-1740, and Cys-1716–Cys-1725. The NTR domain maps to 1593-1740 (CPRQRRALER…FIQEYSTLGC (148 aa)).

As to quaternary structure, in absence of complement activation, circulates in blood as a disulfide-linked trimer of an alpha, beta and gamma chain. In terms of assembly, complement C4b is composed of complement C4b-A, complement C4 beta and complement C4 gamma chains that are associated via disulfide bonds. Non-enzymatic component of the C3 convertase, also named C4bC2b, composed of the serine protease complement C2b (C2), as well as complement C4b. Non-enzymatic component of the C5 convertase, also named C4bC2bC3b, composed of the serine protease complement C2b (C2), complement C3b, as well as complement C4b. Post-translationally, prior to secretion, the single-chain precursor is enzymatically cleaved by plasminogen (PLG) to yield non-identical chains alpha, beta and gamma. During activation of the complement systems, the alpha chain is cleaved into C4a and C4b by different proteases depending on the complement pathway: C4b stays linked to the beta and gamma chains, while C4a is released in the plasma. The alpha chain is cleaved by C1S to generate C4a and C4b following activation by the classical complement system. The alpha chain is cleaved to generate C4a and C4b by MASP2 following activation by the lectin complement system. The alpha chain is cleaved by GZMK to generate C4a and C4b following activation by the GZMK complement system. Further degradation of C4b by C1 into the inactive fragments C4c and C4d blocks the generation of C3 convertase. The proteolytic cleavages often are incomplete so that many structural forms can be found in plasma. Upon activation, the internal thioester bond reacts with carbohydrate antigens on the target surface to form amide or ester bonds, leading to covalent association with the surface of pathogens. In terms of processing, complement C4b interacts with complement C3b via a thioester linkage. Post-translationally, N- and O-glycosylated. O-glycosylated with a core 1 or possibly core 8 glycan.

Its subcellular location is the secreted. It is found in the cell surface. Precursor of non-enzymatic components of the classical, lectin and GZMK complement pathways, which consist in a cascade of proteins that leads to phagocytosis and breakdown of pathogens and signaling that strengthens the adaptive immune system. In terms of biological role, non-enzymatic component of C3 and C5 convertases. Generated following cleavage by complement proteases (C1S, MASP2 or GZMK, depending on the complement pathway), it covalently attaches to the surface of pathogens, where it acts as an opsonin that marks the surface of antigens for removal. It then recruits the serine protease complement C2b to form the C3 and C5 convertases, which cleave and activate C3 and C5, respectively, the next components of the complement pathways. Complement C4b-A isotype is responsible for effective binding to form amide bonds with immune aggregates or protein antigens, while complement C4b-B isotype catalyzes the transacylation of the thioester carbonyl group to form ester bonds with carbohydrate antigens. Its function is as follows. Putative humoral mediator released following cleavage by complement proteases (C1S, MASP2 or GZMK, depending on the complement pathway). While it is strongly similar to anaphylatoxins, its role is unclear. Was reported to act as a mediator of local inflammatory process; however these effects were probably due to contamination with C3a and/C5a anaphylatoxins in biological assays. This chain is Complement C4, found in Cavia porcellus (Guinea pig).